Here is a 108-residue protein sequence, read N- to C-terminus: Small ribosomal subunit protein bS18c (108 aa).

2 stretches are compositionally biased toward basic residues: residues 1–19 (MDKSKRTFRKSKRSFRRRL) and 97–108 (RARKKKIGLLLN). Disordered stretches follow at residues 1–23 (MDKSKRTFRKSKRSFRRRLPPIG) and 83–108 (QFERTESTPRTTGTRARKKKIGLLLN).

It belongs to the bacterial ribosomal protein bS18 family. In terms of assembly, part of the 30S ribosomal subunit.

It localises to the plastid. Its subcellular location is the chloroplast. This chain is Small ribosomal subunit protein bS18c, found in Illicium oligandrum (Star anise).